A 160-amino-acid polypeptide reads, in one-letter code: uncharacterized protein (160 aa).

This is an uncharacterized protein from Escherichia coli O157:H7.